The sequence spans 308 residues: Phosphatidate cytidylyltransferase (308 aa).

8 helical membrane-spanning segments follow: residues 30-50 (FLVL…LGFI), 73-93 (PLST…FLSI), 100-120 (PGFF…WSIF), 127-147 (IGAL…GIPI), 167-187 (IWWA…GYFF), 205-225 (TVVG…IFFL), 235-255 (FPMP…GFFG), and 280-300 (MLDT…FLLI).

The protein belongs to the CDS family.

Its subcellular location is the cell membrane. It carries out the reaction a 1,2-diacyl-sn-glycero-3-phosphate + CTP + H(+) = a CDP-1,2-diacyl-sn-glycerol + diphosphate. Its pathway is phospholipid metabolism; CDP-diacylglycerol biosynthesis; CDP-diacylglycerol from sn-glycerol 3-phosphate: step 3/3. This chain is Phosphatidate cytidylyltransferase (cdsA), found in Chlamydia pneumoniae (Chlamydophila pneumoniae).